The chain runs to 467 residues: Replication factor C large subunit (467 aa).

An ATP-binding site is contributed by 47–54 (GPPGVGKT).

This sequence belongs to the activator 1 small subunits family. RfcL subfamily. As to quaternary structure, heteromultimer composed of small subunits (RfcS) and large subunits (RfcL).

Functionally, part of the RFC clamp loader complex which loads the PCNA sliding clamp onto DNA. This is Replication factor C large subunit from Methanothrix thermoacetophila (strain DSM 6194 / JCM 14653 / NBRC 101360 / PT) (Methanosaeta thermophila).